A 305-amino-acid polypeptide reads, in one-letter code: Protoheme IX farnesyltransferase (305 aa).

Helical transmembrane passes span 26 to 46, 47 to 67, 98 to 118, 119 to 139, 147 to 167, 174 to 194, 220 to 240, 243 to 263, and 284 to 304; these read VMSL…QPVN, PFVA…SGAL, LAVG…AANW, FAAG…TIWL, IVIG…CATG, LLMF…LALF, IFAY…TSVG, LYLA…WQIL, and LSLY…WVGG.

The protein belongs to the UbiA prenyltransferase family. Protoheme IX farnesyltransferase subfamily. Interacts with CtaA.

Its subcellular location is the cell inner membrane. It carries out the reaction heme b + (2E,6E)-farnesyl diphosphate + H2O = Fe(II)-heme o + diphosphate. Its pathway is porphyrin-containing compound metabolism; heme O biosynthesis; heme O from protoheme: step 1/1. Functionally, converts heme B (protoheme IX) to heme O by substitution of the vinyl group on carbon 2 of heme B porphyrin ring with a hydroxyethyl farnesyl side group. The polypeptide is Protoheme IX farnesyltransferase (Paracoccus denitrificans (strain Pd 1222)).